A 38-amino-acid polypeptide reads, in one-letter code: Photosystem II reaction center protein L (38 aa).

A helical transmembrane segment spans residues 17-37; it reads SLYWGLLLIFVLAVLFSNYFF.

The protein belongs to the PsbL family. PSII is composed of 1 copy each of membrane proteins PsbA, PsbB, PsbC, PsbD, PsbE, PsbF, PsbH, PsbI, PsbJ, PsbK, PsbL, PsbM, PsbT, PsbX, PsbY, PsbZ, Psb30/Ycf12, at least 3 peripheral proteins of the oxygen-evolving complex and a large number of cofactors. It forms dimeric complexes.

It localises to the plastid. The protein resides in the chloroplast thylakoid membrane. Functionally, one of the components of the core complex of photosystem II (PSII). PSII is a light-driven water:plastoquinone oxidoreductase that uses light energy to abstract electrons from H(2)O, generating O(2) and a proton gradient subsequently used for ATP formation. It consists of a core antenna complex that captures photons, and an electron transfer chain that converts photonic excitation into a charge separation. This subunit is found at the monomer-monomer interface and is required for correct PSII assembly and/or dimerization. In Adiantum capillus-veneris (Maidenhair fern), this protein is Photosystem II reaction center protein L.